We begin with the raw amino-acid sequence, 506 residues long: AMP phosphorylase (506 aa).

AMP contacts are provided by residues G167, 193 to 198, and T202; that span reads SRAITG. The active-site Proton donor is D255. AMP-binding residues include S263 and K287.

Belongs to the thymidine/pyrimidine-nucleoside phosphorylase family. Type 2 subfamily.

The catalysed reaction is AMP + phosphate = alpha-D-ribose 1,5-bisphosphate + adenine. It catalyses the reaction CMP + phosphate = cytosine + alpha-D-ribose 1,5-bisphosphate. It carries out the reaction UMP + phosphate = alpha-D-ribose 1,5-bisphosphate + uracil. In terms of biological role, catalyzes the conversion of AMP and phosphate to adenine and ribose 1,5-bisphosphate (R15P). Exhibits phosphorylase activity toward CMP and UMP in addition to AMP. Functions in an archaeal AMP degradation pathway, together with R15P isomerase and RubisCO. This Methanosarcina acetivorans (strain ATCC 35395 / DSM 2834 / JCM 12185 / C2A) protein is AMP phosphorylase.